The following is a 191-amino-acid chain: Negative modulator of initiation of replication (191 aa).

Residues 96–97 (AV) form an interaction with DNA region.

It belongs to the SeqA family. Homodimer. Polymerizes to form helical filaments.

It localises to the cytoplasm. Negative regulator of replication initiation, which contributes to regulation of DNA replication and ensures that replication initiation occurs exactly once per chromosome per cell cycle. Binds to pairs of hemimethylated GATC sequences in the oriC region, thus preventing assembly of replication proteins and re-initiation at newly replicated origins. Repression is relieved when the region becomes fully methylated. The sequence is that of Negative modulator of initiation of replication from Shewanella amazonensis (strain ATCC BAA-1098 / SB2B).